Consider the following 221-residue polypeptide: MLDRDGFRPNVGIVLLNQKNQVFWGKRIRTHSWQFPQGGIDRGETPEQAMFRELHEEVGLLPDHVRVVARTRDWLRYEVPDRYVRRDARGHYKGQKQIWYLLQLVGHDWNLNLRATNHPEFDAWRWNDYWVPLDVVIEFKRSVYALALTELARYLPRHEPRNRYLRSGMRTRDGEHAGLFLTRVMSPKPGIQLPPGACFDPIPPTGMPDEREGLPFTAMPR.

The Nudix hydrolase domain occupies 6–149 (GFRPNVGIVL…KRSVYALALT (144 aa)). Residues 38-59 (GGIDRGETPEQAMFRELHEEVG) carry the Nudix box motif.

It belongs to the Nudix hydrolase family. RppH subfamily. A divalent metal cation is required as a cofactor.

Accelerates the degradation of transcripts by removing pyrophosphate from the 5'-end of triphosphorylated RNA, leading to a more labile monophosphorylated state that can stimulate subsequent ribonuclease cleavage. This is RNA pyrophosphohydrolase from Verminephrobacter eiseniae (strain EF01-2).